Here is a 639-residue protein sequence, read N- to C-terminus: Protein P1 (639 aa).

The signal sequence occupies residues 1–20 (MNRFTAYAALFFMFSLCSTA). The next 3 helical transmembrane spans lie at 121–141 (AASV…WTLA), 144–164 (ITLF…LGCI), and 172–192 (ALSL…KIIW). The Peptidase S39 domain maps to 207–399 (VEGYKGFSVP…GITSPNYVFE (193 aa)). Active-site for protease activity residues include H255, D286, and S354. Disordered stretches follow at residues 455-515 (ATNA…PPMD) and 539-639 (VSRV…NSKA). Polar residues predominate over residues 463-488 (TAQTNSAEKTAPSTSAEKTALTNKPL). Basic residues predominate over residues 548 to 561 (QKPKQKKRGRRGGK). Residues 566–577 (SLPPTSTQSTSG) show a composition bias toward polar residues. Over residues 587-602 (ASGSAGTSRATTTPAP) the composition is skewed to low complexity.

This sequence belongs to the peptidase S39B family. Specific enzymatic cleavages in vivo yield mature proteins. The protease probably cleaves itself and releases the VPg protein. The VPg protein is probably further cleaved in its C-terminus.

The protein localises to the membrane. Its function is as follows. Precursor from which the VPg molecule is probably released at the onset of the RNA synthesis. Essential for virus replication. Participates, together with the proteins P0 and P7, in the inhibition of the induction of aphid-induced host phytohormones. This could play a role in the attraction to the infected plants by aphids. The polypeptide is Protein P1 (Solanum tuberosum (Potato)).